The sequence spans 154 residues: Aspartate carbamoyltransferase regulatory chain (154 aa).

Positions 109, 114, 138, and 141 each coordinate Zn(2+).

Belongs to the PyrI family. In terms of assembly, contains catalytic and regulatory chains. It depends on Zn(2+) as a cofactor.

Involved in allosteric regulation of aspartate carbamoyltransferase. The polypeptide is Aspartate carbamoyltransferase regulatory chain (Yersinia enterocolitica serotype O:8 / biotype 1B (strain NCTC 13174 / 8081)).